The primary structure comprises 308 residues: UPF0282 protein M164_2122 (308 aa).

The protein belongs to the UPF0282 family.

The sequence is that of UPF0282 protein M164_2122 from Saccharolobus islandicus (strain M.16.4 / Kamchatka #3) (Sulfolobus islandicus).